We begin with the raw amino-acid sequence, 494 residues long: 3-octaprenyl-4-hydroxybenzoate carboxy-lyase (494 aa).

Position 172 (Asn172) interacts with Mn(2+). Residues 175–177 (IYR), 189–191 (RWL), and 194–195 (RG) each bind prenylated FMN. Glu238 contributes to the Mn(2+) binding site. The active-site Proton donor is the Asp287.

The protein belongs to the UbiD family. Homohexamer. Requires prenylated FMN as cofactor. The cofactor is Mn(2+).

The protein resides in the cell membrane. It carries out the reaction a 4-hydroxy-3-(all-trans-polyprenyl)benzoate + H(+) = a 2-(all-trans-polyprenyl)phenol + CO2. Its pathway is cofactor biosynthesis; ubiquinone biosynthesis. Functionally, catalyzes the decarboxylation of 3-octaprenyl-4-hydroxy benzoate to 2-octaprenylphenol, an intermediate step in ubiquinone biosynthesis. The polypeptide is 3-octaprenyl-4-hydroxybenzoate carboxy-lyase (Shigella flexneri serotype 5b (strain 8401)).